Here is a 1024-residue protein sequence, read N- to C-terminus: Beta-galactosidase (1024 aa).

Asparagine 103 and aspartate 202 together coordinate substrate. Aspartate 202 lines the Na(+) pocket. Mg(2+) contacts are provided by glutamate 417, histidine 419, and glutamate 462. Residues glutamate 462 and glutamate 538 to histidine 541 each bind substrate. The Proton donor role is filled by glutamate 462. Residue glutamate 538 is the Nucleophile of the active site. Asparagine 598 is a binding site for Mg(2+). 2 residues coordinate Na(+): phenylalanine 602 and asparagine 605. Substrate contacts are provided by asparagine 605 and tryptophan 1000.

Belongs to the glycosyl hydrolase 2 family. Homotetramer. Mg(2+) is required as a cofactor. It depends on Na(+) as a cofactor.

It carries out the reaction Hydrolysis of terminal non-reducing beta-D-galactose residues in beta-D-galactosides.. This chain is Beta-galactosidase, found in Escherichia coli O6:K15:H31 (strain 536 / UPEC).